The chain runs to 458 residues: Adenylosuccinate synthetase (458 aa).

GTP is bound by residues 17 to 23 (GDEGKGK) and 45 to 47 (GHT). Catalysis depends on Asp18, which acts as the Proton acceptor. 2 residues coordinate Mg(2+): Asp18 and Gly45. IMP is bound by residues 18 to 21 (DEGK), 43 to 46 (NAGH), Thr137, Arg151, Gln247, Thr262, and Arg330. His46 acts as the Proton donor in catalysis. Substrate is bound at residue 326–332 (VTTGRSR). GTP-binding positions include Arg332, 358–360 (KLD), and 440–442 (STS).

It belongs to the adenylosuccinate synthetase family. As to quaternary structure, homodimer. Requires Mg(2+) as cofactor.

It localises to the cytoplasm. It carries out the reaction IMP + L-aspartate + GTP = N(6)-(1,2-dicarboxyethyl)-AMP + GDP + phosphate + 2 H(+). It participates in purine metabolism; AMP biosynthesis via de novo pathway; AMP from IMP: step 1/2. Functionally, plays an important role in the de novo pathway of purine nucleotide biosynthesis. Catalyzes the first committed step in the biosynthesis of AMP from IMP. The protein is Adenylosuccinate synthetase of Acidovorax sp. (strain JS42).